We begin with the raw amino-acid sequence, 245 residues long: 8-amino-3,8-dideoxy-manno-octulosonate cytidylyltransferase (245 aa).

It belongs to the KdsB family.

It is found in the cytoplasm. It carries out the reaction 8-amino-3,8-dideoxy-alpha-D-manno-octulosonate + CTP = CMP-8-amino-3,8-dideoxy-alpha-D-manno-oct-2-ulosonate + diphosphate. It participates in bacterial outer membrane biogenesis; lipopolysaccharide biosynthesis. In terms of biological role, activates KDO8N (a required 8-carbon sugar) for incorporation into bacterial lipopolysaccharide in the Shewanella genus. In Shewanella sp. (strain W3-18-1), this protein is 8-amino-3,8-dideoxy-manno-octulosonate cytidylyltransferase.